The following is a 402-amino-acid chain: GTPase HflX (402 aa).

The Hflx-type G domain occupies 181–350 (DTVGLIGYTN…MIIEHLNLSI (170 aa)). Residues 187–194 (GYTNAGKT), 212–216 (FTTLT), 233–236 (DTVG), 300–303 (NKVD), and 328–330 (SAK) each bind GTP. 2 residues coordinate Mg(2+): T194 and T214.

Belongs to the TRAFAC class OBG-HflX-like GTPase superfamily. HflX GTPase family. As to quaternary structure, monomer. Associates with the 50S ribosomal subunit. Mg(2+) is required as a cofactor.

The protein resides in the cytoplasm. In terms of biological role, GTPase that associates with the 50S ribosomal subunit and may have a role during protein synthesis or ribosome biogenesis. In Methanocaldococcus jannaschii (strain ATCC 43067 / DSM 2661 / JAL-1 / JCM 10045 / NBRC 100440) (Methanococcus jannaschii), this protein is GTPase HflX.